The following is a 149-amino-acid chain: Putative pre-16S rRNA nuclease (149 aa).

The protein belongs to the YqgF nuclease family.

Its subcellular location is the cytoplasm. Functionally, could be a nuclease involved in processing of the 5'-end of pre-16S rRNA. In Burkholderia lata (strain ATCC 17760 / DSM 23089 / LMG 22485 / NCIMB 9086 / R18194 / 383), this protein is Putative pre-16S rRNA nuclease.